The chain runs to 126 residues: Holo-[acyl-carrier-protein] synthase (126 aa).

Positions 9 and 58 each coordinate Mg(2+).

The protein belongs to the P-Pant transferase superfamily. AcpS family. Requires Mg(2+) as cofactor.

The protein resides in the cytoplasm. The catalysed reaction is apo-[ACP] + CoA = holo-[ACP] + adenosine 3',5'-bisphosphate + H(+). In terms of biological role, transfers the 4'-phosphopantetheine moiety from coenzyme A to a Ser of acyl-carrier-protein. This Vibrio vulnificus (strain YJ016) protein is Holo-[acyl-carrier-protein] synthase.